The primary structure comprises 167 residues: Iron-sulfur cluster assembly protein 1 (167 aa).

The N-terminal 50 residues, 1-50, are a transit peptide targeting the mitochondrion; the sequence is MMLKQAAKKALGLTSRQSTPWSVGILRTYHENVIDHYDNPRNVGSFDKND.

The protein belongs to the NifU family. Component of the core Fe-S cluster (ISC) assembly machinery. Interacts with HSCB. It depends on [2Fe-2S] cluster as a cofactor. As to expression, expressed in roots, stems, leaves, flowers, pollen and siliques.

It localises to the mitochondrion matrix. The protein resides in the cytoplasm. The protein localises to the cytosol. The protein operates within cofactor biosynthesis; iron-sulfur cluster biosynthesis. Its function is as follows. Scaffold protein for the de novo synthesis of iron-sulfur (Fe-S) clusters within mitochondria, which is required for maturation of both mitochondrial and cytoplasmic [2Fe-2S] and [4Fe-4S] proteins. First, a [2Fe-2S] cluster is transiently assembled on the scaffold protein ISCU (ISU1, ISU2 or ISU3). In a second step, the cluster is released from ISCU, transferred to a glutaredoxin, followed by the formation of mitochondrial [2Fe-2S] proteins, the synthesis of [4Fe-4S] clusters and their target-specific insertion into the recipient apoproteins. Cluster assembly on ISCU depends on the function of the cysteine desulfurase complex NFS1-ISD11, which serves as the sulfur donor for cluster synthesis, the iron-binding protein frataxin as the putative iron donor, and the electron transfer chain comprised of ferredoxin reductase and ferredoxin, which receive their electrons from NADH. This chain is Iron-sulfur cluster assembly protein 1 (ISU1), found in Arabidopsis thaliana (Mouse-ear cress).